We begin with the raw amino-acid sequence, 683 residues long: DNA polymerase alpha-associated DNA helicase A (683 aa).

Gly229–Thr236 lines the ATP pocket.

The protein belongs to the DNA2/NAM7 helicase family. As to quaternary structure, associates with the hexameric DNA polymerase alpha.

The protein localises to the cytoplasm. The protein resides in the nucleus. It catalyses the reaction ATP + H2O = ADP + phosphate + H(+). DNA polymerase alpha-associated DNA helicase which may be involved in DNA replication. This chain is DNA polymerase alpha-associated DNA helicase A (HCS1), found in Saccharomyces cerevisiae (strain ATCC 204508 / S288c) (Baker's yeast).